A 601-amino-acid polypeptide reads, in one-letter code: Probable N-acetylgalactosaminyltransferase 7 (601 aa).

Topologically, residues 1-20 are cytoplasmic; that stretch reads MIIARKKLQLQRLWRQRGCR. The chain crosses the membrane as a helical; Signal-anchor for type II membrane protein span at residues 21–38; sequence VATYICLGVLVLFGFVYN. At 39–601 the chain is on the lumenal side; it reads SKGNSMSSIK…FVWKEFYQSS (563 aa). The interval 61–108 is disordered; sequence DLTNKELPGGPDPNTIFRGSELGNYEPKEPEIPSNQPGEHGKPVPVTD. The N-linked (GlcNAc...) asparagine glycan is linked to Asn-135. Cystine bridges form between Cys-146-Cys-382, Cys-373-Cys-452, Cys-490-Cys-506, Cys-529-Cys-542, and Cys-568-Cys-583. The interval 155–265 is catalytic subdomain A; the sequence is LPTVSVVVVF…TNWLPPLLAP (111 aa). Residues Asp-196 and Arg-226 each contribute to the substrate site. The Mn(2+) site is built by Asp-249 and His-251. The catalytic subdomain B stretch occupies residues 328–390; sequence PFRSPTHAGG…PCSHVGHVYR (63 aa). Trp-359 contacts substrate. His-387 provides a ligand contact to Mn(2+). Substrate-binding residues include Arg-390 and Tyr-395. In terms of domain architecture, Ricin B-type lectin spans 477 to 595; sequence DVWGEARNPA…DNERQKFVWK (119 aa).

The protein belongs to the glycosyltransferase 2 family. GalNAc-T subfamily. Mn(2+) serves as cofactor.

It is found in the golgi apparatus membrane. It functions in the pathway protein modification; protein glycosylation. Functionally, probable glycopeptide transferase involved in O-linked oligosaccharide biosynthesis. Glycopeptide transferases catalyze the transfer of an N-acetyl-D-galactosamine residue to an already glycosylated peptide. In contrast to other members of the family, it does not act as a peptide transferase that transfers GalNAc onto serine or threonine residue on peptides that have been tested. Some peptide transferase activity is however not excluded, considering that its appropriate peptide substrate may remain unidentified. The chain is Probable N-acetylgalactosaminyltransferase 7 (gly-7) from Caenorhabditis elegans.